We begin with the raw amino-acid sequence, 118 residues long: MMVTLVTRKDIPPWVKVPEDLKDPEVFQVQSLVLKYLFGPQGSRMSHIEQVSQAMFELKNLESPEELIEVFIYGSQNNKIRAKWMLQSMAERYHLRQQKGVLKLEESMKTLELGQCIE.

The KH; atypical domain occupies Pro24–Leu86.

Belongs to the KHDC1 family.

The protein localises to the cytoplasm. In terms of biological role, involved in the maintenance of embryonic stem (ES) cell pluripotency. Dispensable for self-renewal of pluripotent ES cells and establishment of germ cells. Associates with specific target mRNAs. This Mus musculus (Mouse) protein is Developmental pluripotency-associated protein 5A (Dppa5a).